The chain runs to 196 residues: Molybdenum cofactor guanylyltransferase (196 aa).

Residues 10–12 (LAG), Lys23, Asn51, Asp69, and Asp99 each bind GTP. Asp99 serves as a coordination point for Mg(2+).

Belongs to the MobA family. In terms of assembly, monomer. Requires Mg(2+) as cofactor.

The protein localises to the cytoplasm. It catalyses the reaction Mo-molybdopterin + GTP + H(+) = Mo-molybdopterin guanine dinucleotide + diphosphate. Its function is as follows. Transfers a GMP moiety from GTP to Mo-molybdopterin (Mo-MPT) cofactor (Moco or molybdenum cofactor) to form Mo-molybdopterin guanine dinucleotide (Mo-MGD) cofactor. The protein is Molybdenum cofactor guanylyltransferase of Shewanella sediminis (strain HAW-EB3).